The following is a 290-amino-acid chain: Feruloyl esterase D (290 aa).

Positions 1–25 are cleaved as a signal peptide; that stretch reads MAGLHSRLTTFLLLLLSALPAIAAA. Residues 260–280 form a disordered region; sequence HGGDHNPSQRDPGQNDPFAPR.

This sequence belongs to the serine esterase family.

It is found in the secreted. The catalysed reaction is feruloyl-polysaccharide + H2O = ferulate + polysaccharide.. In terms of biological role, involved in degradation of plant cell walls. Hydrolyzes the feruloyl-arabinose ester bond in arabinoxylans as well as the feruloyl-galactose and feruloyl-arabinose ester bonds in pectin. Active against methyl esters of ferulate (MFA), sinapate (MSA), caffeate (MCA) and p-coumarate (MpCA). The protein is Feruloyl esterase D of Neurospora crassa (strain ATCC 24698 / 74-OR23-1A / CBS 708.71 / DSM 1257 / FGSC 987).